A 199-amino-acid chain; its full sequence is Superoxide dismutase [Mn] (199 aa).

Residues His-27, His-76, Asp-160, and His-164 each coordinate Mn(2+).

This sequence belongs to the iron/manganese superoxide dismutase family. It depends on Mn(2+) as a cofactor.

The enzyme catalyses 2 superoxide + 2 H(+) = H2O2 + O2. Functionally, destroys superoxide anion radicals which are normally produced within the cells and which are toxic to biological systems. The polypeptide is Superoxide dismutase [Mn] (sodA) (Corynebacterium diphtheriae (strain ATCC 700971 / NCTC 13129 / Biotype gravis)).